The primary structure comprises 434 residues: Serine hydroxymethyltransferase (434 aa).

Residues leucine 132 and 136–138 (GHL) each bind (6S)-5,6,7,8-tetrahydrofolate. Residue lysine 241 is modified to N6-(pyridoxal phosphate)lysine.

The protein belongs to the SHMT family. Homodimer. The cofactor is pyridoxal 5'-phosphate.

The protein resides in the cytoplasm. The catalysed reaction is (6R)-5,10-methylene-5,6,7,8-tetrahydrofolate + glycine + H2O = (6S)-5,6,7,8-tetrahydrofolate + L-serine. It functions in the pathway one-carbon metabolism; tetrahydrofolate interconversion. Its pathway is amino-acid biosynthesis; glycine biosynthesis; glycine from L-serine: step 1/1. Catalyzes the reversible interconversion of serine and glycine with tetrahydrofolate (THF) serving as the one-carbon carrier. This reaction serves as the major source of one-carbon groups required for the biosynthesis of purines, thymidylate, methionine, and other important biomolecules. Also exhibits THF-independent aldolase activity toward beta-hydroxyamino acids, producing glycine and aldehydes, via a retro-aldol mechanism. This Nitrobacter hamburgensis (strain DSM 10229 / NCIMB 13809 / X14) protein is Serine hydroxymethyltransferase.